The sequence spans 315 residues: Homoserine kinase (315 aa).

97 to 107 (PPARGLGSSAT) serves as a coordination point for ATP.

It belongs to the GHMP kinase family. Homoserine kinase subfamily.

It localises to the cytoplasm. It catalyses the reaction L-homoserine + ATP = O-phospho-L-homoserine + ADP + H(+). Its pathway is amino-acid biosynthesis; L-threonine biosynthesis; L-threonine from L-aspartate: step 4/5. Its function is as follows. Catalyzes the ATP-dependent phosphorylation of L-homoserine to L-homoserine phosphate. The polypeptide is Homoserine kinase (Synechococcus sp. (strain CC9311)).